The primary structure comprises 228 residues: 7-cyano-7-deazaguanine synthase (228 aa).

8-18 lines the ATP pocket; the sequence is LSGGLDSTTCL. Residues Cys188, Cys198, Cys201, and Cys204 each coordinate Zn(2+).

This sequence belongs to the QueC family. Zn(2+) is required as a cofactor.

The enzyme catalyses 7-carboxy-7-deazaguanine + NH4(+) + ATP = 7-cyano-7-deazaguanine + ADP + phosphate + H2O + H(+). Its pathway is purine metabolism; 7-cyano-7-deazaguanine biosynthesis. Catalyzes the ATP-dependent conversion of 7-carboxy-7-deazaguanine (CDG) to 7-cyano-7-deazaguanine (preQ(0)). The polypeptide is 7-cyano-7-deazaguanine synthase (Legionella pneumophila subsp. pneumophila (strain Philadelphia 1 / ATCC 33152 / DSM 7513)).